A 478-amino-acid polypeptide reads, in one-letter code: Cytochrome c-552 (478 aa).

The first 27 residues, 1–27 (MKKQWTRRSAAAIAMVTTLLLSSHSFA), serve as a signal peptide directing secretion. Heme c is bound at residue His-91. 3 residues coordinate heme: Cys-119, Cys-122, and Lys-123. Cys-157, Cys-160, His-161, Cys-206, Cys-209, and His-210 together coordinate heme c. Positions 212, 213, 258, and 260 each coordinate Ca(2+). A substrate-binding site is contributed by Tyr-213. A substrate-binding site is contributed by His-261. Heme c contacts are provided by His-272, Cys-279, Cys-282, His-283, His-298, Cys-311, Cys-314, His-315, and His-390.

This sequence belongs to the cytochrome c-552 family. It depends on Ca(2+) as a cofactor. The cofactor is heme c.

The protein resides in the periplasm. It catalyses the reaction 6 Fe(III)-[cytochrome c] + NH4(+) + 2 H2O = 6 Fe(II)-[cytochrome c] + nitrite + 8 H(+). The protein operates within nitrogen metabolism; nitrate reduction (assimilation). Its function is as follows. Catalyzes the reduction of nitrite to ammonia, consuming six electrons in the process. This Aliivibrio salmonicida (strain LFI1238) (Vibrio salmonicida (strain LFI1238)) protein is Cytochrome c-552.